The sequence spans 325 residues: Glyoxylate/hydroxypyruvate reductase B (325 aa).

Catalysis depends on residues Arg-237 and Glu-266. His-285 serves as the catalytic Proton donor.

It belongs to the D-isomer specific 2-hydroxyacid dehydrogenase family. GhrB subfamily. As to quaternary structure, homodimer.

It localises to the cytoplasm. The enzyme catalyses glycolate + NADP(+) = glyoxylate + NADPH + H(+). The catalysed reaction is (R)-glycerate + NAD(+) = 3-hydroxypyruvate + NADH + H(+). It catalyses the reaction (R)-glycerate + NADP(+) = 3-hydroxypyruvate + NADPH + H(+). Functionally, catalyzes the NADPH-dependent reduction of glyoxylate and hydroxypyruvate into glycolate and glycerate, respectively. The protein is Glyoxylate/hydroxypyruvate reductase B of Serratia proteamaculans (strain 568).